A 269-amino-acid chain; its full sequence is Expansin-B9 (269 aa).

The signal sequence occupies residues 1–24 (MGSLTTNIVLAVAVVAALVGGGSC). An N-linked (GlcNAc...) asparagine glycan is attached at asparagine 34. The region spanning 63–169 (GGACGIKNVN…RRVRCKYPGG (107 aa)) is the Expansin-like EG45 domain. Cystine bridges form between cysteine 66–cysteine 94, cysteine 97–cysteine 164, and cysteine 102–cysteine 108. An Expansin-like CBD domain is found at 183–264 (NYLAVLVKFV…NWMPDAIYVS (82 aa)).

It belongs to the expansin family. Expansin B subfamily.

It localises to the secreted. Its subcellular location is the cell wall. It is found in the membrane. Its function is as follows. May cause loosening and extension of plant cell walls by disrupting non-covalent bonding between cellulose microfibrils and matrix glucans. No enzymatic activity has been found. May be required for rapid internodal elongation in deepwater rice during submergence. In Oryza sativa subsp. japonica (Rice), this protein is Expansin-B9 (EXPB9).